Reading from the N-terminus, the 127-residue chain is Probable toxin y4kH (127 aa).

It belongs to the MbcT/ParT/Res family.

Its function is as follows. Probable toxic component of a type II toxin-antitoxin (TA) system. It is not known which gene encodes its antitoxin. The polypeptide is Probable toxin y4kH (Sinorhizobium fredii (strain NBRC 101917 / NGR234)).